Consider the following 432-residue polypeptide: Asparagine--tRNA ligase (432 aa).

The protein belongs to the class-II aminoacyl-tRNA synthetase family. As to quaternary structure, homodimer.

It is found in the cytoplasm. The catalysed reaction is tRNA(Asn) + L-asparagine + ATP = L-asparaginyl-tRNA(Asn) + AMP + diphosphate + H(+). This chain is Asparagine--tRNA ligase, found in Lactobacillus gasseri (strain ATCC 33323 / DSM 20243 / BCRC 14619 / CIP 102991 / JCM 1131 / KCTC 3163 / NCIMB 11718 / NCTC 13722 / AM63).